The following is a 241-amino-acid chain: Exosome complex component RRP41 homolog (241 aa).

At M1 the chain carries N-acetylmethionine.

Belongs to the RNase PH family. In terms of assembly, component of the RNA exosome complex. Interacts with RPP4.

It localises to the cytoplasm. Its subcellular location is the nucleus. The protein localises to the nucleolus. Non-catalytic component of the RNA exosome complex which has 3'-&gt;5' exoribonuclease activity and participates in a multitude of cellular RNA processing, maturation and degradation events. In vitro, is a processive phosphorolytic exonuclease and requires a single-stranded poly(A) tail on the substrate RNA for its activity. Can complement the growth defect of a yeast mutant lacking RRP41 exonuclease. Required for normal development of female gametophytes. The sequence is that of Exosome complex component RRP41 homolog from Arabidopsis thaliana (Mouse-ear cress).